The chain runs to 833 residues: MTFYDHTAIEPKWQAFWADNHTFKTGTDASKPKFYALDMFPYPSGAGLHVGHPEGYTATDILSRFKRAQGHNVLHPMGWDAFGLPAEQYAMDTGNDPAEFTAENIANFKRQINALGFSYDWDREVNTTDPNYYKWTQWIFTELYEKGLAYEAEVPVNWVEELGTAIANEEVLPDGTSERGGYPVVRKPMRQWMLKITAYAERLLEDLEEVDWPESIKDMQRNWIGKSTGANVTFKVKDTDKDFTVFTTRPDTLFGATYAVLAPEHALVDAITTADQAEAVADYKRQASLKSDLARTDLAKEKTGVWTGSYAINPVNGNEMPVWIADYVLASYGTGAIMAVPAHDERDWEFAKQFNLDIIPVLEGGNVEEAAFTEDGLHINSDFLDGLDKASAIAKMVEWLEAEGVGNEKVTYRLRDWLFSRQRYWGEPIPIIHWEDGTSTAVPESELPLVLPVTKDIRPSGTGESPLANVTDWLEVTREDGVKGRRETNTMPQWAGSSWYYLRYIDPHNTEKLADEELLKQWLPVDIYVGGAEHAVLHLLYARFWHKVLYDLGVVPTKEPFQKLFNQGMILGTSYRDSRGALVATDKVEKRDGSFFHVETGEELEQAPAKMSKSLKNVVNPDDVVEQYGADTLRVYEMFMGPLDASIAWSEEGLEGSRKFLDRVYRLITTKEITEENSGALDKVYNETVKAVTEQVDQMKFNTAIAQLMVFVNAANKEDKLFSDYAKGFVQLIAPFAPHLGEELWQALTASGESISYVPWPSYDKSKLVENDVEIVVQIKGKVKAKLVVAKDLSREELQEVALANEKVQAEIAGKDIIKVIAVPNKLVNIVIK.

Positions 41-52 (PYPSGAGLHVGH) match the 'HIGH' region motif. The 'KMSKS' region signature appears at 610–614 (KMSKS). Position 613 (K613) interacts with ATP.

This sequence belongs to the class-I aminoacyl-tRNA synthetase family.

The protein localises to the cytoplasm. It catalyses the reaction tRNA(Leu) + L-leucine + ATP = L-leucyl-tRNA(Leu) + AMP + diphosphate. This chain is Leucine--tRNA ligase, found in Streptococcus pyogenes serotype M49 (strain NZ131).